Here is a 231-residue protein sequence, read N- to C-terminus: Ribosomal RNA small subunit methyltransferase G (231 aa).

Residues glycine 75, 125–126 (GE), and arginine 140 each bind S-adenosyl-L-methionine. Over residues 204–213 (AEAEEGDSPE) the composition is skewed to acidic residues. Positions 204-231 (AEAEEGDSPEAADASRGVILELTKKNKG) are disordered.

This sequence belongs to the methyltransferase superfamily. RNA methyltransferase RsmG family.

The protein localises to the cytoplasm. In terms of biological role, specifically methylates the N7 position of a guanine in 16S rRNA. In Rhodopirellula baltica (strain DSM 10527 / NCIMB 13988 / SH1), this protein is Ribosomal RNA small subunit methyltransferase G.